The primary structure comprises 186 residues: Dynactin subunit 3 (186 aa).

Residue Ala2 is modified to N-acetylalanine.

Belongs to the dynactin subunit 3 family. Subunit of dynactin, a multiprotein complex part of a tripartite complex with dynein and a adapter, such as BICDL1, BICD2 or HOOK3. The dynactin complex is built around ACTR1A/ACTB filament and consists of an actin-related filament composed of a shoulder domain, a pointed end and a barbed end. Its length is defined by its flexible shoulder domain. The soulder is composed of 2 DCTN1 subunits, 4 DCTN2 and 2 DCTN3. The 4 DCNT2 (via N-terminus) bind the ACTR1A filament and act as molecular rulers to determine the length. The pointed end is important for binding dynein-dynactin cargo adapters. Consists of 4 subunits: ACTR10, DCNT4, DCTN5 and DCTN6. The barbed end is composed of a CAPZA1:CAPZB heterodimers, which binds ACTR1A/ACTB filament and dynactin and stabilizes dynactin.

It localises to the cytoplasm. It is found in the cytoskeleton. Its subcellular location is the microtubule organizing center. The protein localises to the centrosome. The protein resides in the chromosome. It localises to the centromere. It is found in the kinetochore. Its subcellular location is the spindle. The protein localises to the cleavage furrow. The protein resides in the midbody. Functionally, part of the dynactin complex that activates the molecular motor dynein for ultra-processive transport along microtubules. Together with dynein is involved in spindle assembly and cytokinesis. The polypeptide is Dynactin subunit 3 (Sus scrofa (Pig)).